A 124-amino-acid polypeptide reads, in one-letter code: Large ribosomal subunit protein uL18 (124 aa).

It belongs to the universal ribosomal protein uL18 family. In terms of assembly, part of the 50S ribosomal subunit; part of the 5S rRNA/L5/L18/L25 subcomplex. Contacts the 5S and 23S rRNAs.

Its function is as follows. This is one of the proteins that bind and probably mediate the attachment of the 5S RNA into the large ribosomal subunit, where it forms part of the central protuberance. The polypeptide is Large ribosomal subunit protein uL18 (Orientia tsutsugamushi (strain Boryong) (Rickettsia tsutsugamushi)).